Here is a 540-residue protein sequence, read N- to C-terminus: MTAEVKVEEKQVESEVVIAPAVVPEETTVKAVVEETKVEEDESKPEGVEKSASFKEESDFFADLKESEKKALSDLKSKLEEAIVDNTLLKTKKKESSPMKEKKEEVVKPEAEVEKKKEEAAEEKVEEEKKSEAVVTEEAPKAETVEAVVTEEIIPKEEVTTVVEKVEEETKEEEKKTEDVVTEEVKAETIEVEDEDESVDKDIELWGVPLLPSKGAESTDVILLKFLRARDFKVNEAFEMLKKTLKWRKQNKIDSILGEEFGEDLATAAYMNGVDRESHPVCYNVHSEELYQTIGSEKNREKFLRWRFQLMEKGIQKLNLKPGGVTSLLQIHDLKNAPGVSRTEIWVGIKKVIETLQDNYPEFVSRNIFINVPFWFYAMRAVLSPFLTQRTKSKFVVARPAKVRETLLKYIPADELPVQYGGFKTVDDTEFSNETVSEVVVKPGSSETIEIPAPETEGTLVWDIAVLGWEVNYKEEFVPTEEGAYTVIVQKVKKMGANEGPIRNSFKNSQAGKIVLTVDNVSGKKKKVLYRYRTKTESSS.

Position 53 is a phosphoserine (Ser-53). Residues 61–183 are a coiled coil; that stretch reads FADLKESEKK…EKKTEDVVTE (123 aa). The tract at residues 89–140 is disordered; that stretch reads LKTKKKESSPMKEKKEEVVKPEAEVEKKKEEAAEEKVEEEKKSEAVVTEEAP. A compositionally biased stretch (basic and acidic residues) spans 94 to 140; the sequence is KESSPMKEKKEEVVKPEAEVEKKKEEAAEEKVEEEKKSEAVVTEEAP. Residue Lys-249 forms a Glycyl lysine isopeptide (Lys-Gly) (interchain with G-Cter in ubiquitin) linkage. Residues 258 to 428 enclose the CRAL-TRIO domain; sequence GEEFGEDLAT…QYGGFKTVDD (171 aa). Residues 433–534 enclose the GOLD domain; sequence NETVSEVVVK…KKKVLYRYRT (102 aa).

It belongs to the patellin family.

It localises to the membrane. It is found in the cytoplasm. Carrier protein that may be involved in membrane-trafficking events associated with cell plate formation during cytokinesis. Binds to some hydrophobic molecules such as phosphoinositides and promotes their transfer between the different cellular sites. The polypeptide is Patellin-4 (PATL4) (Arabidopsis thaliana (Mouse-ear cress)).